The chain runs to 224 residues: Response regulator protein GraR (224 aa).

The Response regulatory domain occupies 2-115; the sequence is QILLVEDDNT…VLIAKLQAIY (114 aa). Asp-51 is modified (4-aspartylphosphate). A DNA-binding region (ompR/PhoB-type) is located at residues 126-224; sequence KRTLTWQDAV…KVGKGYMAHE (99 aa). Phosphothreonine occurs at positions 128, 130, and 149.

In terms of assembly, interacts with GraX. In terms of processing, phosphorylated by GraS. Phosphorylated by Stk1; phosphorylation increases the DNA-binding activity of GraR.

The protein localises to the cytoplasm. Functionally, member of the two-component regulatory system GraR/GraS involved in resistance against cationic antimicrobial peptides (CAMPs). Upon phosphorylation by GraS, functions as a transcription regulator by direct binding to promoter regions of target genes such as adhesins, exoproteins, transporters, toxins, and proteins involved in cell wall synthesis. Down-regulates the expression of many genes involved in RNA and amino acid synthesis or glycolysis. This Staphylococcus aureus (strain Mu3 / ATCC 700698) protein is Response regulator protein GraR (graR).